A 576-amino-acid polypeptide reads, in one-letter code: RING finger and SPRY domain-containing protein 1 (576 aa).

Residues 1–16 (MIVFGWAVFLASRSLG) form the signal peptide. S50 bears the Phosphoserine mark. The disordered stretch occupies residues 50–99 (SGTDDSVDTQQQQAENSAVPTADTRSQPRDPVRPPRRGRGPHEPRRKKQN). The span at 57–68 (DTQQQQAENSAV) shows a compositional bias: polar residues. Basic residues predominate over residues 83-97 (PPRRGRGPHEPRRKK). A B30.2/SPRY domain is found at 300-483 (LFLKEGRQLT…CEFNFGAKPF (184 aa)). N314 carries an N-linked (GlcNAc...) asparagine glycan. The segment at 527–562 (CSLCCDEVADTQLKPCGHSDLCMDCALQLETCPLCR) adopts an RING-type zinc-finger fold.

The protein resides in the secreted. The protein is RING finger and SPRY domain-containing protein 1 (RSPRY1) of Homo sapiens (Human).